The following is a 466-amino-acid chain: Trigger factor (466 aa).

Positions 162–243 constitute a PPIase FKBP-type domain; it reads GDVVSIDLSA…VRSVKERELP (82 aa). Positions 428 to 466 are disordered; sequence GNTIDTSEFFGKRVSAGEAEEAEPADEGAARAASDEATT. Residues 457–466 are compositionally biased toward low complexity; sequence ARAASDEATT.

The protein belongs to the FKBP-type PPIase family. Tig subfamily.

It is found in the cytoplasm. The enzyme catalyses [protein]-peptidylproline (omega=180) = [protein]-peptidylproline (omega=0). Involved in protein export. Acts as a chaperone by maintaining the newly synthesized protein in an open conformation. Functions as a peptidyl-prolyl cis-trans isomerase. The chain is Trigger factor from Mycobacterium bovis (strain BCG / Tokyo 172 / ATCC 35737 / TMC 1019).